The chain runs to 176 residues: Translation initiation factor IF-3 (176 aa).

It belongs to the IF-3 family. Monomer.

Its subcellular location is the cytoplasm. Functionally, IF-3 binds to the 30S ribosomal subunit and shifts the equilibrium between 70S ribosomes and their 50S and 30S subunits in favor of the free subunits, thus enhancing the availability of 30S subunits on which protein synthesis initiation begins. This is Translation initiation factor IF-3 from Streptococcus pyogenes serotype M4 (strain MGAS10750).